A 473-amino-acid chain; its full sequence is 3-isopropylmalate dehydratase large subunit (473 aa).

[4Fe-4S] cluster-binding residues include Cys348, Cys413, and Cys416.

The protein belongs to the aconitase/IPM isomerase family. LeuC type 1 subfamily. As to quaternary structure, heterodimer of LeuC and LeuD. It depends on [4Fe-4S] cluster as a cofactor.

The catalysed reaction is (2R,3S)-3-isopropylmalate = (2S)-2-isopropylmalate. The protein operates within amino-acid biosynthesis; L-leucine biosynthesis; L-leucine from 3-methyl-2-oxobutanoate: step 2/4. Catalyzes the isomerization between 2-isopropylmalate and 3-isopropylmalate, via the formation of 2-isopropylmaleate. In Parvibaculum lavamentivorans (strain DS-1 / DSM 13023 / NCIMB 13966), this protein is 3-isopropylmalate dehydratase large subunit.